A 1828-amino-acid polypeptide reads, in one-letter code: AT-rich interactive domain-containing protein 2 (1828 aa).

Residue Ala-2 is modified to N-acetylalanine. Position 4 is a phosphoserine (Ser-4). Glycyl lysine isopeptide (Lys-Gly) (interchain with G-Cter in SUMO2) cross-links involve residues Lys-7, Lys-15, and Lys-119. Residues 13–105 (RRKGLAFLDE…YLEKYEKVHH (93 aa)) form the ARID domain. Positions 313 to 317 (LRFLL) match the LXXLL motif. Positions 524–603 (ACQWLNAHFE…IHVIGVKRRA (80 aa)) form a DNA-binding region, RFX-type winged-helix. Lys-555 participates in a covalent cross-link: Glycyl lysine isopeptide (Lys-Gly) (interchain with G-Cter in SUMO2). Ser-631 and Ser-635 each carry phosphoserine. Residue Thr-653 is modified to Phosphothreonine. Ser-689 carries the phosphoserine modification. Phosphothreonine is present on Thr-692. Disordered stretches follow at residues 824–843 (TSPQ…SQPQ), 962–1028 (LTGQ…QVQV), 1245–1339 (KEAT…EPVD), 1360–1462 (KGDG…RPSV), 1483–1503 (HSGP…TNGT), and 1566–1618 (SAAQ…HADP). Residues 987 to 1011 (AMSSSSTLQSQGPPPTVSQMLSVKR) show a composition bias toward polar residues. Positions 1012 to 1028 (QQQQQHSPAAPAQQVQV) are enriched in low complexity. Positions 1245 to 1259 (KEATGLHVHERKIEV) are enriched in basic and acidic residues. Polar residues predominate over residues 1267 to 1283 (RGTTNTSNGDTSESELQ). Ser-1294 carries the post-translational modification Phosphoserine. 2 stretches are compositionally biased toward polar residues: residues 1295-1320 (DSSL…SNGP) and 1366-1379 (LSKN…SNHV). At Ser-1385 the chain carries Phosphoserine. Composition is skewed to polar residues over residues 1390 to 1400 (QGTSGATQQDT) and 1419 to 1428 (GSPSTSSMQE). Positions 1453–1462 (SDVPQQRPSV) are enriched in low complexity. The residue at position 1491 (Ser-1491) is a Phosphoserine. 2 stretches are compositionally biased toward polar residues: residues 1491-1503 (SALS…TNGT) and 1567-1586 (AAQQ…APQN). Over residues 1594–1614 (AVQVQGQPSSSQPSPVSASSQ) the composition is skewed to low complexity. The C2H2-type zinc finger occupies 1626–1651 (FMCLWQSCKKWFQTPSQVFYHAATEH). Residues Lys-1695, Lys-1710, and Lys-1725 each participate in a glycyl lysine isopeptide (Lys-Gly) (interchain with G-Cter in SUMO2) cross-link. Residues 1697–1726 (DEPGQVANQKSSTKQPTVGGTGSAPRAQKA) are disordered. Residues 1702-1714 (VANQKSSTKQPTV) are compositionally biased toward polar residues.

This sequence belongs to the RFX family. Component of the SWI/SNF-B (PBAF) chromatin remodeling complex, at least composed of SMARCA4/BRG1, SMARCB1/BAF47/SNF5, ACTL6A/BAF53A or ACTL6B/BAF53B, SMARCE1/BAF57, SMARCD1/BAF60A, SMARCD2/BAF60B, perhaps SMARCD3/BAF60C, SMARCC1/BAF155, SMARCC2/BAF170, PBRM1/BAF180, ARID2/BAF200 and actin. Interacts with SRF. Forms complexes with SRF and SRF cofactors MYOCD, NKX2-5 and SRFBP1. As to expression, highly expressed in testis, expressed in heart, liver and kidney.

It is found in the nucleus. Involved in transcriptional activation and repression of select genes by chromatin remodeling (alteration of DNA-nucleosome topology). Required for the stability of the SWI/SNF chromatin remodeling complex SWI/SNF-B (PBAF). May be involved in targeting the complex to different genes. May be involved in regulating transcriptional activation of cardiac genes. The polypeptide is AT-rich interactive domain-containing protein 2 (Mus musculus (Mouse)).